The following is a 465-amino-acid chain: Cruciform DNA-recognizing protein 1 (465 aa).

Disordered regions lie at residues 107–227 (EAGG…VPNP) and 247–276 (RLNK…ALPQ). Residues 127–151 (NRKKNKRNNKKRRSKLKKKSTKNNK) show a composition bias toward basic residues. 2 positions are modified to phosphoserine: Ser-153 and Ser-156. Residues 156–165 (SLDDNEEEDG) are compositionally biased toward acidic residues. An X-DNA-binding region spans residues 160-161 (NE). Over residues 166–177 (VTGTTTEDVTGT) the composition is skewed to low complexity. Thr-182 bears the Phosphothreonine mark. Ser-271 is modified (phosphoserine). The residue at position 295 (Thr-295) is a Phosphothreonine. The interval 300–465 (AVTPLINEPE…FFGKLKKLFK (166 aa)) is disordered. 2 positions are modified to phosphoserine: Ser-319 and Ser-343. Over residues 337 to 363 (LVEKRESTEGVLDGSKKVENKAKKDEE) the composition is skewed to basic and acidic residues. Thr-366 carries the post-translational modification Phosphothreonine. Composition is skewed to basic and acidic residues over residues 385–398 (AEGR…EEKE) and 404–428 (EKGS…EVKK). A Phosphoserine modification is found at Ser-394. Ser-440 bears the Phosphoserine mark. Positions 451-465 (KKKTGFFGKLKKLFK) are enriched in basic residues.

Belongs to the CRP1/MDG1 family. Cleaved in the vicinity of position 160 to give an X-DNA-binding N-terminal subpeptide and a non-DNA-binding C-terminal subpeptide.

In terms of biological role, cruciform DNA-binding protein which exerts an enhancing effect on the cleavage of cruciform DNA (X-DNA) by endonuclease VII from bacteriophage T4. This chain is Cruciform DNA-recognizing protein 1 (CRP1), found in Saccharomyces cerevisiae (strain ATCC 204508 / S288c) (Baker's yeast).